A 265-amino-acid polypeptide reads, in one-letter code: Indole-3-glycerol phosphate synthase (265 aa).

This sequence belongs to the TrpC family.

The catalysed reaction is 1-(2-carboxyphenylamino)-1-deoxy-D-ribulose 5-phosphate + H(+) = (1S,2R)-1-C-(indol-3-yl)glycerol 3-phosphate + CO2 + H2O. The protein operates within amino-acid biosynthesis; L-tryptophan biosynthesis; L-tryptophan from chorismate: step 4/5. The polypeptide is Indole-3-glycerol phosphate synthase (Xanthomonas axonopodis pv. citri (strain 306)).